Consider the following 451-residue polypeptide: Phosphoglucosamine mutase (451 aa).

The Phosphoserine intermediate role is filled by Ser102. Ser102, Asp243, Asp245, and Asp247 together coordinate Mg(2+). Position 102 is a phosphoserine (Ser102).

The protein belongs to the phosphohexose mutase family. Mg(2+) is required as a cofactor. Activated by phosphorylation.

The catalysed reaction is alpha-D-glucosamine 1-phosphate = D-glucosamine 6-phosphate. In terms of biological role, catalyzes the conversion of glucosamine-6-phosphate to glucosamine-1-phosphate. The polypeptide is Phosphoglucosamine mutase (Sinorhizobium medicae (strain WSM419) (Ensifer medicae)).